A 122-amino-acid chain; its full sequence is Protein TCL1B3 (122 aa).

Belongs to the TCL1 family.

The chain is Protein TCL1B3 (Tcl1b3) from Mus musculus (Mouse).